A 185-amino-acid polypeptide reads, in one-letter code: UPF0149 protein PD_0802 (185 aa).

It belongs to the UPF0149 family.

This chain is UPF0149 protein PD_0802, found in Xylella fastidiosa (strain Temecula1 / ATCC 700964).